We begin with the raw amino-acid sequence, 1087 residues long: Collagen alpha-2(I) chain (1087 aa).

A disordered region spans residues Ala-1 to Val-931. Composition is skewed to low complexity over residues Glu-83 to Pro-120, Glu-150 to Pro-159, and Pro-166 to Pro-187. Residues Phe-189–Gln-199 show a composition bias toward pro residues. A compositionally biased stretch (low complexity) spans Pro-201 to Ala-211. The segment covering Gly-218–Gly-227 has biased composition (gly residues). Composition is skewed to low complexity over residues Glu-228–Gln-241, Ala-278–Ser-321, Pro-335–Pro-345, Lys-360–Thr-384, and Gln-396–Pro-408. Over residues Gly-409–Gly-418 the composition is skewed to gly residues. The span at Asn-443–Gln-453 shows a compositional bias: low complexity. Residues Gly-466–Gly-493 show a composition bias toward gly residues. Basic and acidic residues predominate over residues Lys-504–Pro-515. 3 stretches are compositionally biased toward low complexity: residues Pro-560–Arg-602, Phe-613–Lys-640, and Pro-677–Gln-695. The segment covering Gly-708–Gly-717 has biased composition (gly residues). 2 stretches are compositionally biased toward low complexity: residues Glu-718–Pro-740 and Pro-776–Pro-788. Positions Gly-792–Gly-812 are enriched in gly residues. Over residues Ala-813–Pro-828 the composition is skewed to low complexity. Residues Arg-829–Leu-843 are compositionally biased toward basic and acidic residues. Low complexity-rich tracts occupy residues Leu-849 to Asn-868 and Ala-897 to Pro-909. Positions Ala-910–Pro-924 are enriched in pro residues. The Fibrillar collagen NC1 domain maps to Tyr-929–Lys-1087.

It belongs to the fibrillar collagen family.

It is found in the secreted. It localises to the extracellular space. Its subcellular location is the extracellular matrix. The chain is Collagen alpha-2(I) chain from Epinephelus costae (Goldblotch grouper).